Here is a 120-residue protein sequence, read N- to C-terminus: Xibalbin-1 (120 aa).

Positions 1-21 are cleaved as a signal peptide; the sequence is MISKILIAACALLLISHLVLA. Residues 22–63 constitute a propeptide that is removed on maturation; it reads VPYLEDGLNSLHNRTGESDETRGYTIQLLKEMPEDDAVEDYS. Disulfide bonds link Cys-79-Cys-94, Cys-86-Cys-99, Cys-93-Cys-110, and Cys-101-Cys-108.

Belongs to the xibalbin-1 family. Expressed by the venom gland. Not found in the whole body.

The protein localises to the secreted. Functionally, probable neurotoxin. Strongly inhibits voltage-gated potassium channels (Kv1.1/KCNA1, Kv1.2/KCNA2, Kv1.3/KCNA3, and Kv1.6/KCNA6, with the highest toxicity against Kv1.6 (74% inhibition at 1 uM)) and mildly inhibits sodium channels (Nav1.2/SCN2A, Nav1.4/SCN4A, Nav1.5/SCN5A, Nav1.6/SCN8A, and BgNav). Induces activation of protein kinase A type II (PKA-II) and MAP kinase Erk1/2 in primary nociceptive and non-nociceptive sensory neurons. Does not show cytotoxic activity. Does not have an impact on Ca2+, cAMP, and NO signaling in the cell types analyzed. Does not interfere with the adhesion of leukocytes to endothelial cells. The polypeptide is Xibalbin-1 (Xibalbanus tulumensis (Blind cave remipede)).